The primary structure comprises 261 residues: Glucose 1-dehydrogenase (261 aa).

Residue 11 to 35 (AITGAASGLGKAMAIRFGKEQAKVV) coordinates NADP(+). Residue Ser145 participates in substrate binding. Catalysis depends on Tyr158, which acts as the Proton acceptor.

Belongs to the short-chain dehydrogenases/reductases (SDR) family. As to quaternary structure, homotetramer.

The enzyme catalyses D-glucose + NAD(+) = D-glucono-1,5-lactone + NADH + H(+). The catalysed reaction is D-glucose + NADP(+) = D-glucono-1,5-lactone + NADPH + H(+). The sequence is that of Glucose 1-dehydrogenase (gdh) from Bacillus subtilis (strain 168).